Consider the following 192-residue polypeptide: MITISDAAQAHFVKLLADQPEGTHIRVFVISPGTAQAECGVSYCPPDAVESDDIELEFNGFNAMVDEKSAPFLEEATIDFVTDQLGSQLTLKAPNAKMRKVSGDAPLVERIEYVIQSEINPQLASHGGNIMLVEITSEGVAVLQFGGGCNGCSQVDITLKDGIEKQLLDMFPGELTGVRDVTDHQHGEHSYA.

2 residues coordinate [4Fe-4S] cluster: C149 and C152.

It belongs to the NfuA family. In terms of assembly, homodimer. It depends on [4Fe-4S] cluster as a cofactor.

Its function is as follows. Involved in iron-sulfur cluster biogenesis. Binds a 4Fe-4S cluster, can transfer this cluster to apoproteins, and thereby intervenes in the maturation of Fe/S proteins. Could also act as a scaffold/chaperone for damaged Fe/S proteins. This chain is Fe/S biogenesis protein NfuA, found in Shewanella putrefaciens (strain CN-32 / ATCC BAA-453).